We begin with the raw amino-acid sequence, 500 residues long: Probable glycine dehydrogenase (decarboxylating) subunit 2 (500 aa).

An N6-(pyridoxal phosphate)lysine modification is found at K273.

It belongs to the GcvP family. C-terminal subunit subfamily. In terms of assembly, the glycine cleavage system is composed of four proteins: P, T, L and H. In this organism, the P 'protein' is a heterodimer of two subunits. The cofactor is pyridoxal 5'-phosphate.

It carries out the reaction N(6)-[(R)-lipoyl]-L-lysyl-[glycine-cleavage complex H protein] + glycine + H(+) = N(6)-[(R)-S(8)-aminomethyldihydrolipoyl]-L-lysyl-[glycine-cleavage complex H protein] + CO2. Its function is as follows. The glycine cleavage system catalyzes the degradation of glycine. The P protein binds the alpha-amino group of glycine through its pyridoxal phosphate cofactor; CO(2) is released and the remaining methylamine moiety is then transferred to the lipoamide cofactor of the H protein. The chain is Probable glycine dehydrogenase (decarboxylating) subunit 2 from Rhodopirellula baltica (strain DSM 10527 / NCIMB 13988 / SH1).